Reading from the N-terminus, the 282-residue chain is UPF0294 protein VIBHAR_03217 (282 aa).

It belongs to the UPF0294 family.

The protein localises to the cytoplasm. This is UPF0294 protein VIBHAR_03217 from Vibrio campbellii (strain ATCC BAA-1116).